The primary structure comprises 442 residues: uncharacterized protein (442 aa).

Residues 1–23 (MEILLIVLGAVVAGLLCPVQTAA) form the signal peptide. Disordered stretches follow at residues 36–67 (TSIS…NSSD) and 91–115 (ANET…TNTR). Low complexity predominate over residues 48–67 (TSSGELSQSTFSSSSTNSSD). N-linked (GlcNAc...) asparagine glycans are attached at residues N64, N92, N99, N130, N174, N225, N244, N346, N363, N386, and N398.

Its subcellular location is the secreted. This is an uncharacterized protein from Arthroderma benhamiae (strain ATCC MYA-4681 / CBS 112371) (Trichophyton mentagrophytes).